The following is a 430-amino-acid chain: Ribosomal protein uS12 methylthiotransferase RimO (430 aa).

In terms of domain architecture, MTTase N-terminal spans 2–118; the sequence is AKIFTISLGC…IDNVIKRPKH (117 aa). Residues C11, C47, C81, C150, C154, and C157 each coordinate [4Fe-4S] cluster. The Radical SAM core domain occupies 136 to 368; the sequence is LTAPHSAYLK…AQSRVIDSIN (233 aa). Residues 369 to 430 enclose the TRAM domain; it reads RKLKGKTVKV…KGYNRTGKII (62 aa).

The protein belongs to the methylthiotransferase family. RimO subfamily. [4Fe-4S] cluster serves as cofactor.

Its subcellular location is the cytoplasm. The catalysed reaction is L-aspartate(89)-[ribosomal protein uS12]-hydrogen + (sulfur carrier)-SH + AH2 + 2 S-adenosyl-L-methionine = 3-methylsulfanyl-L-aspartate(89)-[ribosomal protein uS12]-hydrogen + (sulfur carrier)-H + 5'-deoxyadenosine + L-methionine + A + S-adenosyl-L-homocysteine + 2 H(+). In terms of biological role, catalyzes the methylthiolation of an aspartic acid residue of ribosomal protein uS12. This is Ribosomal protein uS12 methylthiotransferase RimO from Elusimicrobium minutum (strain Pei191).